We begin with the raw amino-acid sequence, 321 residues long: Beta-ketoacyl-[acyl-carrier-protein] synthase III (321 aa).

Active-site residues include Cys-114 and His-248. The segment at 249–253 (QANIR) is ACP-binding. The active site involves Asn-278.

This sequence belongs to the thiolase-like superfamily. FabH family. Homodimer.

The protein resides in the cytoplasm. It catalyses the reaction malonyl-[ACP] + acetyl-CoA + H(+) = 3-oxobutanoyl-[ACP] + CO2 + CoA. It participates in lipid metabolism; fatty acid biosynthesis. In terms of biological role, catalyzes the condensation reaction of fatty acid synthesis by the addition to an acyl acceptor of two carbons from malonyl-ACP. Catalyzes the first condensation reaction which initiates fatty acid synthesis and may therefore play a role in governing the total rate of fatty acid production. Possesses both acetoacetyl-ACP synthase and acetyl transacylase activities. Its substrate specificity determines the biosynthesis of branched-chain and/or straight-chain of fatty acids. In Methylococcus capsulatus (strain ATCC 33009 / NCIMB 11132 / Bath), this protein is Beta-ketoacyl-[acyl-carrier-protein] synthase III.